The primary structure comprises 376 residues: Peroxisomal membrane protein PEX14 (376 aa).

Positions 1-12 (MASSEQAEQPNQ) are enriched in polar residues. The tract at residues 1–24 (MASSEQAEQPNQPSSPPGSENVVP) is disordered. Ala-2 is subject to N-acetylalanine. At 2–108 (ASSEQAEQPN…YSPRGSRWRD (107 aa)) the chain is on the peroxisomal side. Lys-34 is modified (N6-acetyllysine). The disordered stretch occupies residues 70–102 (SGTAADEPSPLGPATPVVPVQPPHLTPQPYSPR). Pro residues predominate over residues 88–99 (PVQPPHLTPQPY). Residues 109 to 127 (YGALAIIMAGIAFGFHQLY) traverse the membrane as a helical segment. Topologically, residues 128–376 (KRYLLPLILG…EGASNETERD (249 aa)) are cytoplasmic. Positions 230–376 (PPSPSAPKIP…EGASNETERD (147 aa)) are disordered. Ser-232 is subject to Phosphoserine. Composition is skewed to low complexity over residues 247–259 (SSSP…VNHH) and 265–275 (SPVSNESTSSS). 2 positions are modified to phosphoserine: Ser-282 and Ser-334. Residues 323–341 (KEDEDDEDDDVSHVDEEDV) are compositionally biased toward acidic residues. Residues 359 to 376 (QVEKLRRPEGASNETERD) show a composition bias toward basic and acidic residues.

It belongs to the peroxin-14 family. In terms of assembly, interacts with PEX13; forming the PEX13-PEX14 docking complex. Interacts with PEX5 (via WxxxF/Y motifs). Interacts with PEX19. Interacts with tubulin.

It localises to the peroxisome membrane. Its function is as follows. Component of the PEX13-PEX14 docking complex, a translocon channel that specifically mediates the import of peroxisomal cargo proteins bound to PEX5 receptor. The PEX13-PEX14 docking complex forms a large import pore which can be opened to a diameter of about 9 nm. Mechanistically, PEX5 receptor along with cargo proteins associates with the PEX14 subunit of the PEX13-PEX14 docking complex in the cytosol, leading to the insertion of the receptor into the organelle membrane with the concomitant translocation of the cargo into the peroxisome matrix. Plays a key role for peroxisome movement through a direct interaction with tubulin. The chain is Peroxisomal membrane protein PEX14 from Mus musculus (Mouse).